Here is a 107-residue protein sequence, read N- to C-terminus: DNA-directed RNA polymerase subunit omega (107 aa).

Belongs to the RNA polymerase subunit omega family. In terms of assembly, the RNAP catalytic core consists of 2 alpha, 1 beta, 1 beta' and 1 omega subunit. When a sigma factor is associated with the core the holoenzyme is formed, which can initiate transcription.

It carries out the reaction RNA(n) + a ribonucleoside 5'-triphosphate = RNA(n+1) + diphosphate. Functionally, promotes RNA polymerase assembly. Latches the N- and C-terminal regions of the beta' subunit thereby facilitating its interaction with the beta and alpha subunits. The sequence is that of DNA-directed RNA polymerase subunit omega from Oenococcus oeni (strain ATCC BAA-331 / PSU-1).